A 511-amino-acid polypeptide reads, in one-letter code: Tryptophan 5-halogenase PyrH (511 aa).

Positions 10, 13, 36, 39, 42, 44, and 47 each coordinate FAD. Position 50 (Ser-50) interacts with L-tryptophan. Lys-75 is an active-site residue. L-tryptophan-binding residues include Pro-93, Gln-160, and Gln-163. FAD is bound by residues Val-195 and Leu-345. 2 residues coordinate chloride: Thr-356 and Gly-357. Residue Ile-358 coordinates FAD. L-tryptophan contacts are provided by Gly-450 and Tyr-454.

This sequence belongs to the flavin-dependent halogenase family. Bacterial tryptophan halogenase subfamily. Homodimer.

The catalysed reaction is L-tryptophan + FADH2 + chloride + O2 = 5-chloro-L-tryptophan + FAD + 2 H2O. It participates in antibiotic biosynthesis. Its function is as follows. Involved in the biosynthesis of the antibiotic compound pyrroindomycin B. Catalyzes the chlorination of tryptophan (Trp) at C5 position to yield 5-chloro-L-tryptophan. It is also able to use bromide ions to generate monobrominated Trp, but the brominating activity is only about 75% of the chlorinating activity. This is Tryptophan 5-halogenase PyrH from Streptomyces rugosporus.